A 627-amino-acid polypeptide reads, in one-letter code: Anti-CBASS protein Acb1 (627 aa).

Residue Y105 participates in 3',3'-cGAMP binding. Y105 lines the 3',3'-cUAMP pocket. The tract at residues 437-474 (LADQPETESANENTEQPESGEEGEEGQPTRRAANDAKP) is disordered. Residues H508, T510, H584, and T586 contribute to the active site. 3',3'-cGAMP contacts are provided by E614 and W620. 3',3'-cUAMP contacts are provided by E614 and W620.

This sequence belongs to the anti-CBASS protein Acb1 family.

The enzyme catalyses 3',3'-cUAMP + H2O = U[3'-5']pAp[3'] + H(+). It carries out the reaction 3',3',3'-c-tri-AMP + H2O = A[3'-5']pA[3'-5']pAp[3'] + H(+). It catalyses the reaction 3',3',3'-cAAG + H2O = G[3'-5']pA[3'-5']pAp[3'] + H(+). The catalysed reaction is 3',3',3'-cAAG + H2O = A[3'-5']pG[3'-5']pAp[3'] + H(+). The enzyme catalyses 3',3'-cGAMP + H2O = G[3'-5']pAp[3'] + H(+). Functionally, counteracts or regulates the endogenous CBASS antiviral defense system. Phosphodiesterase that enables metal-independent hydrolysis of the host cyclic di- and trinucleotide CBASS signals such as 3'3'-cGAMP, 3'3'cUA, and 3'3'3'-cAAA. This is Anti-CBASS protein Acb1 from Caulobacter sp. (strain RHG1).